The chain runs to 928 residues: Isoleucine--tRNA ligase (928 aa).

The 'HIGH' region signature appears at 57 to 67 (PFANGNIHMGH). An L-isoleucyl-5'-AMP-binding site is contributed by E552. Residues 593–597 (KMSKS) carry the 'KMSKS' region motif. K596 contacts ATP. Residues C887, C890, C907, and C910 each coordinate Zn(2+).

Belongs to the class-I aminoacyl-tRNA synthetase family. IleS type 1 subfamily. Monomer. The cofactor is Zn(2+).

It localises to the cytoplasm. It catalyses the reaction tRNA(Ile) + L-isoleucine + ATP = L-isoleucyl-tRNA(Ile) + AMP + diphosphate. In terms of biological role, catalyzes the attachment of isoleucine to tRNA(Ile). As IleRS can inadvertently accommodate and process structurally similar amino acids such as valine, to avoid such errors it has two additional distinct tRNA(Ile)-dependent editing activities. One activity is designated as 'pretransfer' editing and involves the hydrolysis of activated Val-AMP. The other activity is designated 'posttransfer' editing and involves deacylation of mischarged Val-tRNA(Ile). In Lacticaseibacillus paracasei (strain ATCC 334 / BCRC 17002 / CCUG 31169 / CIP 107868 / KCTC 3260 / NRRL B-441) (Lactobacillus paracasei), this protein is Isoleucine--tRNA ligase.